The following is an 83-amino-acid chain: Neurotoxin-1'' (83 aa).

An N-terminal signal peptide occupies residues Met1–Ser19. The region spanning Arg21–Thr82 is the LCN-type CS-alpha/beta domain. Cystine bridges form between Cys31–Cys81, Cys35–Cys53, Cys39–Cys63, and Cys43–Cys65. A propeptide (removed by a carboxypeptidase (in neurotoxin-1/1')) is located at residue Arg83.

It belongs to the long (4 C-C) scorpion toxin superfamily. Sodium channel inhibitor family. Alpha subfamily. Expressed by the venom gland.

Its subcellular location is the secreted. Functionally, alpha toxins bind voltage-independently at site-3 of sodium channels (Nav) and inhibit the inactivation of the activated channels, thereby blocking neuronal transmission. Is active against mammals and binds with high affinity rat brain synaptosomes. This is Neurotoxin-1'' from Androctonus australis (Sahara scorpion).